The primary structure comprises 245 residues: MVTPVTWMDNPIEVYVNDSVWVPGPTDDRCPAKPEEEGMMINISIVYRYPPICLGRAPGCLMPAVQNWLVEVPTVSPNSRFTYHMVSGMSLRPRVNYLQDFSYQRSLKFRPKGKPCPKEIPKESKNTEVLVWEECVANSAVILQNNEFGTIIDWAPRGQFYHNCSGQTQSCPSAQVSPAVDSDLTESLDKHKHKKLQSFYPWEWGEKGISTPRPEIISPVSGPEHPELWRLWPDTTLEFGLEIKL.

The tract at residues 1 to 245 (MVTPVTWMDN…TLEFGLEIKL (245 aa)) is truncated surface protein.

The protein belongs to the beta type-B retroviral envelope protein family. HERV class-II K(HML-2) env subfamily. Expressed in lung, placenta, testis, peripheral blood lymphocytes, and teratocarcinoma cell lines.

It is found in the virion. Functionally, retroviral envelope proteins mediate receptor recognition and membrane fusion during early infection. Endogenous envelope proteins may have kept, lost or modified their original function during evolution. This Homo sapiens (Human) protein is Endogenous retrovirus group K member 5 Env polyprotein (ERVK-5).